A 193-amino-acid polypeptide reads, in one-letter code: Fe/S biogenesis protein NfuA (193 aa).

Residues Cys-151 and Cys-154 each coordinate [4Fe-4S] cluster.

The protein belongs to the NfuA family. In terms of assembly, homodimer. The cofactor is [4Fe-4S] cluster.

Its function is as follows. Involved in iron-sulfur cluster biogenesis. Binds a 4Fe-4S cluster, can transfer this cluster to apoproteins, and thereby intervenes in the maturation of Fe/S proteins. Could also act as a scaffold/chaperone for damaged Fe/S proteins. This is Fe/S biogenesis protein NfuA from Buchnera aphidicola subsp. Cinara cedri (strain Cc).